The sequence spans 113 residues: Ribulose bisphosphate carboxylase small subunit (113 aa).

Belongs to the RuBisCO small chain family. In terms of assembly, heterohexadecamer of 8 large and 8 small subunits.

The protein localises to the carboxysome. In terms of biological role, ruBisCO catalyzes two reactions: the carboxylation of D-ribulose 1,5-bisphosphate, the primary event in carbon dioxide fixation, as well as the oxidative fragmentation of the pentose substrate in the photorespiration process. Both reactions occur simultaneously and in competition at the same active site. Although the small subunit is not catalytic it is essential for maximal activity. The chain is Ribulose bisphosphate carboxylase small subunit from Synechococcus sp. (strain WH7803).